The primary structure comprises 182 residues: Protein GrpE (182 aa).

Belongs to the GrpE family. In terms of assembly, homodimer.

It is found in the cytoplasm. Functionally, participates actively in the response to hyperosmotic and heat shock by preventing the aggregation of stress-denatured proteins, in association with DnaK and GrpE. It is the nucleotide exchange factor for DnaK and may function as a thermosensor. Unfolded proteins bind initially to DnaJ; upon interaction with the DnaJ-bound protein, DnaK hydrolyzes its bound ATP, resulting in the formation of a stable complex. GrpE releases ADP from DnaK; ATP binding to DnaK triggers the release of the substrate protein, thus completing the reaction cycle. Several rounds of ATP-dependent interactions between DnaJ, DnaK and GrpE are required for fully efficient folding. This is Protein GrpE from Aquifex aeolicus (strain VF5).